The chain runs to 312 residues: Ornithine carbamoyltransferase (312 aa).

Carbamoyl phosphate contacts are provided by residues 57 to 60 (STRT), Gln-84, Arg-108, and 135 to 138 (HPCQ). L-ornithine-binding positions include Asn-166, Asp-226, and 230-231 (SM). Carbamoyl phosphate contacts are provided by residues 265–266 (CL) and Arg-293.

This sequence belongs to the aspartate/ornithine carbamoyltransferase superfamily. OTCase family.

It localises to the cytoplasm. The enzyme catalyses carbamoyl phosphate + L-ornithine = L-citrulline + phosphate + H(+). It functions in the pathway amino-acid biosynthesis; L-arginine biosynthesis; L-arginine from L-ornithine and carbamoyl phosphate: step 1/3. Functionally, reversibly catalyzes the transfer of the carbamoyl group from carbamoyl phosphate (CP) to the N(epsilon) atom of ornithine (ORN) to produce L-citrulline. In Brucella suis biovar 1 (strain 1330), this protein is Ornithine carbamoyltransferase.